The primary structure comprises 289 residues: Inorganic pyrophosphatase (289 aa).

Ser2 is modified (N-acetylserine). Lys57 is modified (N6-acetyllysine). Mg(2+) is bound by residues Asp116, Asp121, and Asp153. Lys228 carries the N6-acetyllysine modification. Position 250 is a phosphoserine (Ser250).

This sequence belongs to the PPase family. As to quaternary structure, homodimer. It depends on Mg(2+) as a cofactor. In terms of tissue distribution, expressed ubiquitously.

The protein resides in the cytoplasm. It carries out the reaction diphosphate + H2O = 2 phosphate + H(+). The chain is Inorganic pyrophosphatase (PPA1) from Homo sapiens (Human).